A 122-amino-acid polypeptide reads, in one-letter code: Large ribosomal subunit protein uL14 (122 aa).

This sequence belongs to the universal ribosomal protein uL14 family. Part of the 50S ribosomal subunit. Forms a cluster with proteins L3 and L19. In the 70S ribosome, L14 and L19 interact and together make contacts with the 16S rRNA in bridges B5 and B8.

Functionally, binds to 23S rRNA. Forms part of two intersubunit bridges in the 70S ribosome. In Beutenbergia cavernae (strain ATCC BAA-8 / DSM 12333 / CCUG 43141 / JCM 11478 / NBRC 16432 / NCIMB 13614 / HKI 0122), this protein is Large ribosomal subunit protein uL14.